Here is a 464-residue protein sequence, read N- to C-terminus: Transcription factor EAT1 (464 aa).

The basic motif; degenerate stretch occupies residues 261 to 274; the sequence is GKGKANFATERERR. Residues 261–310 form the bHLH domain; it reads GKGKANFATERERREQLNVKFRTLRMLFPNPTKNDRASIVGDAIEYIDEL. Positions 275 to 310 are helix-loop-helix motif; the sequence is EQLNVKFRTLRMLFPNPTKNDRASIVGDAIEYIDEL. Residues 338-357 are disordered; sequence QEAAADGESSSMRPVRDDQD.

The protein belongs to the bHLH protein family. Interacts with TDR.

It localises to the nucleus. In terms of biological role, transcription factor involved in the regulation of tapetum programmed cell death (PCD) and degradation during male reproductive development. Interacts with TDR and promote tapetal PCD by regulating the expression of RTS, and the two lipid-transfer proteins C4 and C6, which function in microspore development. Acts downstream from and interacts with TDR in the regulation of tapetal PCD. Regulates directly the aspartic protease AP25 and AP37 during tapetal PCD. May not target the cysteine protease CP1. In Oryza sativa subsp. japonica (Rice), this protein is Transcription factor EAT1.